A 380-amino-acid chain; its full sequence is DNA primase small subunit PriS (380 aa).

Residues Asp-101, Asp-103, and Asp-282 contribute to the active site.

It belongs to the eukaryotic-type primase small subunit family. In terms of assembly, heterodimer of a small subunit (PriS) and a large subunit (PriL). Mg(2+) is required as a cofactor. It depends on Mn(2+) as a cofactor.

Functionally, catalytic subunit of DNA primase, an RNA polymerase that catalyzes the synthesis of short RNA molecules used as primers for DNA polymerase during DNA replication. The small subunit contains the primase catalytic core and has DNA synthesis activity on its own. Binding to the large subunit stabilizes and modulates the activity, increasing the rate of DNA synthesis while decreasing the length of the DNA fragments, and conferring RNA synthesis capability. The DNA polymerase activity may enable DNA primase to also catalyze primer extension after primer synthesis. May also play a role in DNA repair. In Hyperthermus butylicus (strain DSM 5456 / JCM 9403 / PLM1-5), this protein is DNA primase small subunit PriS.